The chain runs to 101 residues: Integration host factor subunit alpha (101 aa).

It belongs to the bacterial histone-like protein family. Heterodimer of an alpha and a beta chain.

Functionally, this protein is one of the two subunits of integration host factor, a specific DNA-binding protein that functions in genetic recombination as well as in transcriptional and translational control. This chain is Integration host factor subunit alpha, found in Saccharophagus degradans (strain 2-40 / ATCC 43961 / DSM 17024).